Reading from the N-terminus, the 335-residue chain is Ferrochelatase (335 aa).

Fe cation-binding residues include histidine 207 and glutamate 288.

The protein belongs to the ferrochelatase family.

Its subcellular location is the cytoplasm. The enzyme catalyses heme b + 2 H(+) = protoporphyrin IX + Fe(2+). It participates in porphyrin-containing compound metabolism; protoheme biosynthesis; protoheme from protoporphyrin-IX: step 1/1. Functionally, catalyzes the ferrous insertion into protoporphyrin IX. The chain is Ferrochelatase from Helicobacter pylori (strain G27).